The chain runs to 382 residues: S-adenosylmethionine decarboxylase proenzyme (382 aa).

Residue Phe-32 participates in substrate binding. Residues Glu-33 and Glu-36 contribute to the active site. Substrate is bound at residue Leu-87. The active-site Schiff-base intermediate with substrate; via pyruvic acid is Ser-90. The residue at position 90 (Ser-90) is a Pyruvic acid (Ser); by autocatalysis. The active-site Proton donor; for catalytic activity is Cys-104. Phe-248 serves as a coordination point for substrate. Active-site proton acceptor; for processing activity residues include Ser-254 and His-267. Residue Glu-271 participates in substrate binding.

It belongs to the eukaryotic AdoMetDC family. Heterotetramer of two alpha and two beta chains. It depends on pyruvate as a cofactor. In terms of processing, is synthesized initially as an inactive proenzyme. Formation of the active enzyme involves a self-maturation process in which the active site pyruvoyl group is generated from an internal serine residue via an autocatalytic post-translational modification. Two non-identical subunits are generated from the proenzyme in this reaction, and the pyruvate is formed at the N-terminus of the alpha chain, which is derived from the carboxyl end of the proenzyme. The post-translation cleavage follows an unusual pathway, termed non-hydrolytic serinolysis, in which the side chain hydroxyl group of the serine supplies its oxygen atom to form the C-terminus of the beta chain, while the remainder of the serine residue undergoes an oxidative deamination to produce ammonia and the pyruvoyl group blocking the N-terminus of the alpha chain.

It catalyses the reaction S-adenosyl-L-methionine + H(+) = S-adenosyl 3-(methylsulfanyl)propylamine + CO2. It functions in the pathway amine and polyamine biosynthesis; S-adenosylmethioninamine biosynthesis; S-adenosylmethioninamine from S-adenosyl-L-methionine: step 1/1. In Leishmania donovani, this protein is S-adenosylmethionine decarboxylase proenzyme.